The sequence spans 387 residues: MELNTLKSTFINNFGKEPTSLFFSPGRINLIGEHIDYNGGFVFPCPITLGTFAAASLREDRICRAYSLNFESLGVIEFSLDDLSYKKEDNWTNYLKGVLKVLIEKGYKIDKGIDLVINGNLPNGAGLSSSASLEMLIVKILDTFFSLNISKVDAALIGKEVENTYIGVNSGIMDQFAISLGEKDKAILLDCNSLYYEYVPLNLGDNSIIIMNTNKRRELADSKYNERRKECDDSLDTLKKYTNISSLCELTSLEFETYKDKIEDSNKLRRCVHAISENERVKDAVKALKENNLELFGQLMNQSHISLRDDYEVTGKELDTLAENAWKQPGVLGARMTGAGFGGCAIAIVNNAHVDEFIKNVGQAYKDAIGYEASFYVASIGNGPTEL.

Glutamate 33 to aspartate 36 contributes to the substrate binding site. ATP contacts are provided by residues serine 67 and glycine 124–serine 130. Mg(2+) contacts are provided by serine 130 and glutamate 162. The active-site Proton acceptor is aspartate 174. A substrate-binding site is contributed by tyrosine 224.

This sequence belongs to the GHMP kinase family. GalK subfamily.

Its subcellular location is the cytoplasm. It carries out the reaction alpha-D-galactose + ATP = alpha-D-galactose 1-phosphate + ADP + H(+). It functions in the pathway carbohydrate metabolism; galactose metabolism. Its function is as follows. Catalyzes the transfer of the gamma-phosphate of ATP to D-galactose to form alpha-D-galactose-1-phosphate (Gal-1-P). The sequence is that of Galactokinase from Clostridium perfringens (strain ATCC 13124 / DSM 756 / JCM 1290 / NCIMB 6125 / NCTC 8237 / Type A).